Consider the following 301-residue polypeptide: Methionyl-tRNA formyltransferase (301 aa).

(6S)-5,6,7,8-tetrahydrofolate is bound at residue 109-112 (SLLP).

It belongs to the Fmt family.

The catalysed reaction is L-methionyl-tRNA(fMet) + (6R)-10-formyltetrahydrofolate = N-formyl-L-methionyl-tRNA(fMet) + (6S)-5,6,7,8-tetrahydrofolate + H(+). In terms of biological role, attaches a formyl group to the free amino group of methionyl-tRNA(fMet). The formyl group appears to play a dual role in the initiator identity of N-formylmethionyl-tRNA by promoting its recognition by IF2 and preventing the misappropriation of this tRNA by the elongation apparatus. The protein is Methionyl-tRNA formyltransferase of Ruegeria pomeroyi (strain ATCC 700808 / DSM 15171 / DSS-3) (Silicibacter pomeroyi).